Reading from the N-terminus, the 267-residue chain is Non-homologous end joining protein Ku (267 aa).

In terms of domain architecture, Ku spans 11–195 (AVGQVSCAVA…KVKGEMLELA (185 aa)). The disordered stretch occupies residues 229-267 (GRKPKRKAAPKKAREPSDLMAALRESVAATERPRRRKAG).

It belongs to the prokaryotic Ku family. Homodimer. Interacts with LigD.

In terms of biological role, with LigD forms a non-homologous end joining (NHEJ) DNA repair enzyme, which repairs dsDNA breaks with reduced fidelity. Binds linear dsDNA with 5'- and 3'- overhangs but not closed circular dsDNA nor ssDNA. Recruits and stimulates the ligase activity of LigD. This is Non-homologous end joining protein Ku from Cereibacter sphaeroides (strain KD131 / KCTC 12085) (Rhodobacter sphaeroides).